Here is a 307-residue protein sequence, read N- to C-terminus: Elongation factor Ts (307 aa).

Residues 80–83 (TDFV) form an involved in Mg(2+) ion dislocation from EF-Tu region.

Belongs to the EF-Ts family.

Its subcellular location is the cytoplasm. Functionally, associates with the EF-Tu.GDP complex and induces the exchange of GDP to GTP. It remains bound to the aminoacyl-tRNA.EF-Tu.GTP complex up to the GTP hydrolysis stage on the ribosome. In Bradyrhizobium diazoefficiens (strain JCM 10833 / BCRC 13528 / IAM 13628 / NBRC 14792 / USDA 110), this protein is Elongation factor Ts.